The following is an 812-amino-acid chain: Leucine-rich repeat-containing protein 41 (812 aa).

The interval 45 to 54 (ALFELCGRAV) is interaction with Elongin BC complex. A phosphoserine mark is found at Ser155, Ser276, and Ser326. Residues 267–408 (GEASRGRAPS…GARTRQGPGA (142 aa)) form a disordered region. Thr327 carries the phosphothreonine modification. Over residues 354–381 (TKRSPSAPAATSSASSSTSSYKRAPASS) the composition is skewed to low complexity. Phosphoserine is present on residues Ser357 and Ser373. Residues 387–401 (PLKRFKRAAGKKGAR) show a composition bias toward basic residues. 7 LRR repeats span residues 487-507 (WVSL…IFRL), 518-530 (AGCR…LSDL), 531-555 (FSPL…VLSI), 613-635 (SGSL…FGLV), 636-659 (LQTL…LADC), 701-728 (NSTL…VFSE), and 731-752 (SSSL…LLEF).

Part of an E3 ubiquitin-protein ligase complex with Elongin BC (ELOB and ELOC), RBX1 and CUL5. Component of a probable ECS(LRRC41) complex which contains CUL5, RNF7/RBX2, Elongin BC and LRRC41. Interacts with CUL5, RNF7, ELOB and ELOC.

It functions in the pathway protein modification; protein ubiquitination. Its function is as follows. Probable substrate recognition component of an ECS (Elongin BC-CUL2/5-SOCS-box protein) E3 ubiquitin ligase complex which mediates the ubiquitination and subsequent proteasomal degradation of target proteins. This chain is Leucine-rich repeat-containing protein 41 (LRRC41), found in Homo sapiens (Human).